The sequence spans 431 residues: Polygalacturonase ADPG1 (431 aa).

An N-terminal signal peptide occupies residues 1 to 23 (MARCCRHLAVFLCVLLMLSLCKA). PbH1 repeat units follow at residues 223 to 249 (CNKV…HITN) and 250 to 271 (TQNI…SIED). Aspartate 264 serves as the catalytic Proton donor. The active site involves histidine 287. 3 PbH1 repeats span residues 303-324 (VSGI…RIKT), 332-353 (AKNI…IIDQ), and 398-420 (CQGI…NANV).

It belongs to the glycosyl hydrolase 28 family. As to expression, expressed in flower buds and siliques, in the dehiscence zone of anthers (stomium cells) and maturing siliques. Expressed in stigma during pollen tube growth. Not expressed in seeds or in the floral part or leaf abscission zone but found at the junction between the seed and the funiculus at the site of seed abscission.

The protein resides in the secreted. The protein localises to the cell wall. Its subcellular location is the cytoplasm. The enzyme catalyses (1,4-alpha-D-galacturonosyl)n+m + H2O = (1,4-alpha-D-galacturonosyl)n + (1,4-alpha-D-galacturonosyl)m.. Its function is as follows. Polygalacturonase involved in cell separation in the final stages of pod shatter and in anther dehiscence. Not involved in floral organ abscission. This chain is Polygalacturonase ADPG1 (ADPG1), found in Arabidopsis thaliana (Mouse-ear cress).